We begin with the raw amino-acid sequence, 366 residues long: Tubulin-like protein CetZ (366 aa).

GTP-binding positions include 10-14, 103-105, glutamate 136, asparagine 163, and asparagine 181; these read QCGTK and GTG.

Belongs to the CetZ family.

The protein resides in the cytoplasm. Its function is as follows. Involved in cell shape control. This chain is Tubulin-like protein CetZ, found in Pyrococcus furiosus (strain ATCC 43587 / DSM 3638 / JCM 8422 / Vc1).